The sequence spans 336 residues: D-erythrose-4-phosphate dehydrogenase (336 aa).

Position 11–12 (11–12 (RI)) interacts with NAD(+). Substrate is bound by residues 153 to 155 (SCT), arginine 199, 212 to 213 (TR), and arginine 235. Cysteine 154 serves as the catalytic Nucleophile. An NAD(+)-binding site is contributed by asparagine 317.

This sequence belongs to the glyceraldehyde-3-phosphate dehydrogenase family. Epd subfamily. In terms of assembly, homotetramer.

It localises to the cytoplasm. The catalysed reaction is D-erythrose 4-phosphate + NAD(+) + H2O = 4-phospho-D-erythronate + NADH + 2 H(+). It functions in the pathway cofactor biosynthesis; pyridoxine 5'-phosphate biosynthesis; pyridoxine 5'-phosphate from D-erythrose 4-phosphate: step 1/5. Its function is as follows. Catalyzes the NAD-dependent conversion of D-erythrose 4-phosphate to 4-phosphoerythronate. The protein is D-erythrose-4-phosphate dehydrogenase of Alteromonas mediterranea (strain DSM 17117 / CIP 110805 / LMG 28347 / Deep ecotype).